We begin with the raw amino-acid sequence, 124 residues long: Competence protein ComGG (124 aa).

A signal peptide spans 1 to 28; the sequence is MYRTRGFIYPAVLFVSALVLLIVNFVAA.

In terms of assembly, the transformation pili are flexible filaments, consisting mainly of the major pilin ComGC and smaller amounts of the minor pilins, including at least ComGD, ComGF and ComGG. Interacts with ComGC; the interaction is probably direct. Interacts with ComGD. Interacts with ComGF. May act as a link between ComGC, ComGD and ComGF. Homodimer; disulfide-linked. A minor fraction of ComGG is found as a disulfide-bonded homodimer. Post-translationally, partial processing of ComGG in competent cells requires ComC.

It localises to the cell membrane. The protein resides in the secreted. Required for formation of the type IV-like pilus (T4P) that plays a role in transformation. Transformation pili are dynamically extended and retracted, perhaps thereby promoting DNA uptake and transformation. Required for transformation and DNA binding. The protein is Competence protein ComGG (comGG) of Bacillus subtilis (strain 168).